A 407-amino-acid chain; its full sequence is Protein CNPPD1 (407 aa).

Residues 233-253 (CLLAVAYVSSVALAVASVAVI) traverse the membrane as a helical segment.

This sequence belongs to the CNPPD1 family.

Its subcellular location is the membrane. In Mus musculus (Mouse), this protein is Protein CNPPD1 (Cnppd1).